The primary structure comprises 164 residues: Shikimate kinase (164 aa).

10-15 lines the ATP pocket; it reads GVGKTT. Mg(2+) is bound at residue threonine 14. Substrate contacts are provided by aspartate 28, arginine 52, and glycine 75. An ATP-binding site is contributed by arginine 116. Arginine 134 serves as a coordination point for substrate. Arginine 151 is a binding site for ATP.

Belongs to the shikimate kinase family. As to quaternary structure, monomer. Mg(2+) is required as a cofactor.

The protein resides in the cytoplasm. It catalyses the reaction shikimate + ATP = 3-phosphoshikimate + ADP + H(+). The protein operates within metabolic intermediate biosynthesis; chorismate biosynthesis; chorismate from D-erythrose 4-phosphate and phosphoenolpyruvate: step 5/7. In terms of biological role, catalyzes the specific phosphorylation of the 3-hydroxyl group of shikimic acid using ATP as a cosubstrate. The protein is Shikimate kinase of Streptococcus equi subsp. zooepidemicus (strain MGCS10565).